The following is a 189-amino-acid chain: Flavin prenyltransferase UbiX (189 aa).

FMN is bound by residues 10 to 12 (GAS), S36, 91 to 94 (STNT), and R126. Dimethylallyl phosphate contacts are provided by Y156 and K172.

It belongs to the UbiX/PAD1 family.

It catalyses the reaction dimethylallyl phosphate + FMNH2 = prenylated FMNH2 + phosphate. Its function is as follows. Flavin prenyltransferase that catalyzes the synthesis of the prenylated FMN cofactor (prenyl-FMN) for 4-hydroxy-3-polyprenylbenzoic acid decarboxylase UbiD. The prenyltransferase is metal-independent and links a dimethylallyl moiety from dimethylallyl monophosphate (DMAP) to the flavin N5 and C6 atoms of FMN. In Aquifex aeolicus (strain VF5), this protein is Flavin prenyltransferase UbiX.